The sequence spans 216 residues: Refilin-B (216 aa).

Residues 1–55 (MVGRLSLQDVPELVDTKKKGDGVLDSPDSGLPPSPSPSHWGLAATAGGGGERAPV) are disordered. Phosphoserine occurs at positions 6 and 26.

Belongs to the Refilin family. Interacts with FLNA and FLNB. As to expression, detected in various tissues, with highest expression in lung, followed by spleen.

The protein resides in the cytoplasm. It localises to the cytoskeleton. In terms of biological role, involved in the regulation of the perinuclear actin network and nuclear shape through interaction with filamins. Plays an essential role in the formation of cartilaginous skeletal elements. This Mus musculus (Mouse) protein is Refilin-B.